A 244-amino-acid polypeptide reads, in one-letter code: DNA polymerase sliding clamp (244 aa).

The protein belongs to the PCNA family. In terms of assembly, homotrimer. The subunits circularize to form a toroid; DNA passes through its center. Replication factor C (RFC) is required to load the toroid on the DNA.

Sliding clamp subunit that acts as a moving platform for DNA processing. Responsible for tethering the catalytic subunit of DNA polymerase to DNA during high-speed replication. In conjunction with replication factor C (RFC) stimulates DNA synthesis by PolB, relieving inhibition by replication protein A (RPA). This Methanothermobacter thermautotrophicus (strain ATCC 29096 / DSM 1053 / JCM 10044 / NBRC 100330 / Delta H) (Methanobacterium thermoautotrophicum) protein is DNA polymerase sliding clamp.